Consider the following 415-residue polypeptide: Gamma-glutamyl phosphate reductase (415 aa).

Belongs to the gamma-glutamyl phosphate reductase family.

It is found in the cytoplasm. It catalyses the reaction L-glutamate 5-semialdehyde + phosphate + NADP(+) = L-glutamyl 5-phosphate + NADPH + H(+). Its pathway is amino-acid biosynthesis; L-proline biosynthesis; L-glutamate 5-semialdehyde from L-glutamate: step 2/2. Functionally, catalyzes the NADPH-dependent reduction of L-glutamate 5-phosphate into L-glutamate 5-semialdehyde and phosphate. The product spontaneously undergoes cyclization to form 1-pyrroline-5-carboxylate. The sequence is that of Gamma-glutamyl phosphate reductase from Listeria monocytogenes serovar 1/2a (strain ATCC BAA-679 / EGD-e).